The following is a 167-amino-acid chain: Small ribosomal subunit protein uS9 (167 aa).

Residues 1 to 41 form a disordered region; the sequence is MNTEAVAPDVAEEEVLTSYTSESSASADDAPKKERPALTVS. The span at 17–26 shows a compositional bias: polar residues; it reads TSYTSESSAS.

Belongs to the universal ribosomal protein uS9 family.

The polypeptide is Small ribosomal subunit protein uS9 (Renibacterium salmoninarum (strain ATCC 33209 / DSM 20767 / JCM 11484 / NBRC 15589 / NCIMB 2235)).